Reading from the N-terminus, the 84-residue chain is Delta-stichotoxin-Sgt3a (84 aa).

A signal peptide spans 1 to 19; it reads MAYLKIVLVALMLVVAVSA. Positions 20–33 are excised as a propeptide; that stretch reads MRLSDQEDQDISVA. 3 cysteine pairs are disulfide-bonded: Cys-38–Cys-78, Cys-40–Cys-68, and Cys-61–Cys-79. A propeptide is located at residue Gly-84.

Belongs to the sea anemone sodium channel inhibitory toxin family. Type II subfamily.

The protein resides in the secreted. It is found in the nematocyst. In terms of biological role, binds specifically to voltage-gated sodium channels (Nav), thereby delaying their inactivation during signal transduction. The sequence is that of Delta-stichotoxin-Sgt3a from Stichodactyla gigantea (Giant carpet anemone).